The chain runs to 652 residues: Carboxypeptidase Z (652 aa).

Residues 1–20 (MPTTPLLLAALAALAALAVA) form the signal peptide. Residues 41–163 (THSATCVDLH…APEEEGCYDP (123 aa)) form the FZ domain. 5 disulfide bridges follow: Cys46-Cys112, Cys54-Cys105, Cys96-Cys132, Cys121-Cys160, and Cys125-Cys149. Asn60 is a glycosylation site (N-linked (GlcNAc...) asparagine). Residues 189 to 505 (AHHSYAQMVR…EPLLNFLEMV (317 aa)) enclose the Peptidase M14 domain. 2 residues coordinate Zn(2+): His251 and Glu254. Residue Asn284 is glycosylated (N-linked (GlcNAc...) asparagine). Zn(2+) is bound at residue His383. Glu475 (proton donor/acceptor) is an active-site residue. The tract at residues 594-628 (FLPGPSRALPRSLDPQGAPAQLDFEPPRARRQPAS) is disordered.

It belongs to the peptidase M14 family. It depends on Zn(2+) as a cofactor. As to expression, abundantly expressed in the placenta, with low to moderate levels in the brain, lung, thymus and kidney.

It localises to the secreted. The protein resides in the extracellular space. It is found in the extracellular matrix. With respect to regulation, inhibited by 2-mercaptomethyl-3-guanidinoethylthiopropanoic acid (MGTA) and guanidinoethylmercaptosuccinic acid (GEMSA). Inhibited by chelating agents such as EDTA and EGTA. In terms of biological role, cleaves substrates with C-terminal arginine residues. Probably modulates the Wnt signaling pathway, by cleaving some undefined protein. May play a role in cleavage during prohormone processing. The protein is Carboxypeptidase Z (Cpz) of Rattus norvegicus (Rat).